We begin with the raw amino-acid sequence, 466 residues long: Glycosyl hydrolase family 109 protein (466 aa).

The segment at residues 1–30 is a signal peptide (tat-type signal); it reads MENTRRSFLKKVSAAGIGAAGLAMAGNAGA. Residues 59–60, D81, 130–133, 151–152, and N180 contribute to the NAD(+) site; these read SR, WEWH, and EV. Y209 contacts substrate. Position 241–245 (241–245) interacts with NAD(+); that stretch reads AEAQW. Substrate is bound by residues R246, 258 to 261, and Y340; that span reads YPTH. Y258 contacts NAD(+).

The protein belongs to the Gfo/Idh/MocA family. Glycosyl hydrolase 109 subfamily. NAD(+) serves as cofactor. In terms of processing, predicted to be exported by the Tat system. The position of the signal peptide cleavage has not been experimentally proven.

Its function is as follows. Glycosidase. This Parabacteroides distasonis (strain ATCC 8503 / DSM 20701 / CIP 104284 / JCM 5825 / NCTC 11152) protein is Glycosyl hydrolase family 109 protein.